The sequence spans 1354 residues: Rho-associated protein kinase 1 (1354 aa).

Residue serine 2 is modified to N-acetylserine. The Protein kinase domain occupies 76–338 (YEVVKVIGRG…VEEIKRHLFF (263 aa)). ATP contacts are provided by residues 82 to 90 (IGRGAFGEV) and lysine 105. The Proton acceptor role is filled by aspartate 198. Residues 341–409 (DQWAWETLRD…YSNRRYLSPA (69 aa)) form the AGC-kinase C-terminal domain. The segment at 368–727 (FDDLEEDKGD…KKLKEEREAR (360 aa)) is interaction with FHOD1. Residues 422 to 692 (KSLQENLQKT…RLEQEVNEHK (271 aa)) are a coiled coil. An REM-1 domain is found at 479 to 556 (STVSQIEKEK…LEEANDLLRT (78 aa)). Positions 707–946 (EAKSVAMCEM…AVSRLEETNS (240 aa)) are SHROOM3 binding. In terms of domain architecture, RhoBD spans 949–1015 (TKDIELLRKE…LAEIMNRKDF (67 aa)). The tract at residues 998-1010 (LKTQAVNKLAEIM) is RHOA binding. Residues 1011–1102 (NRKDFKIDKK…KLSDLSDSTS (92 aa)) adopt a coiled-coil conformation. The interval 1101 to 1120 (TSVASFPSADETDPNLPESR) is disordered. 2 positions are modified to phosphoserine: serine 1105 and serine 1108. Residues 1115 to 1354 (NLPESRIEGW…VVKNTSGKTS (240 aa)) are auto-inhibitory. The PH domain occupies 1118 to 1317 (ESRIEGWLSV…WVTHLVKKIP (200 aa)). The Phorbol-ester/DAG-type zinc-finger motif lies at 1228–1283 (GHEFIPTLYHFPANCEACAKPLWHVFKPPPALECRRCHVKCHRDHLDKKEDLISPC). A Phosphoserine modification is found at serine 1328. Positions 1333 to 1354 (STRSTANQSFRKVVKNTSGKTS) are disordered.

Belongs to the protein kinase superfamily. AGC Ser/Thr protein kinase family. In terms of assembly, homodimer. Interacts with RHOA (activated by GTP), RHOB, RHOC, GEM, MYLC2B, RHOE, PPP1R12A, LIMK1, LIMK2, TSG101, CHORDC1, DAPK3, PFN1, PTEN and JIP3. Interacts with FHOD1 in a Src-dependent manner. Interacts with ITGB1BP1 (via N-terminus and PTB domain). Interacts with SHROOM3. Mg(2+) is required as a cofactor. Post-translationally, autophosphorylated on serine and threonine residues. Cleaved by caspase-3 during apoptosis. This leads to constitutive activation of the kinase and membrane blebbing. As to expression, detected in corneal epithelium.

It is found in the cytoplasm. The protein resides in the cytoskeleton. Its subcellular location is the microtubule organizing center. The protein localises to the centrosome. It localises to the centriole. It is found in the golgi apparatus membrane. The protein resides in the cell projection. Its subcellular location is the bleb. The protein localises to the cell membrane. It localises to the lamellipodium. It is found in the ruffle. It carries out the reaction L-seryl-[protein] + ATP = O-phospho-L-seryl-[protein] + ADP + H(+). It catalyses the reaction L-threonyl-[protein] + ATP = O-phospho-L-threonyl-[protein] + ADP + H(+). Activated by RHOA binding. Inhibited by Y-27632. Its function is as follows. Protein kinase which is a key regulator of the actin cytoskeleton and cell polarity. Involved in regulation of smooth muscle contraction, actin cytoskeleton organization, stress fiber and focal adhesion formation, neurite retraction, cell adhesion and motility via phosphorylation of DAPK3, GFAP, LIMK1, LIMK2, MYL9/MLC2, TPPP, PFN1 and PPP1R12A. Phosphorylates FHOD1 and acts synergistically with it to promote SRC-dependent non-apoptotic plasma membrane blebbing. Phosphorylates JIP3 and regulates the recruitment of JNK to JIP3 upon UVB-induced stress. Acts as a suppressor of inflammatory cell migration by regulating PTEN phosphorylation and stability. Acts as a negative regulator of VEGF-induced angiogenic endothelial cell activation. Required for centrosome positioning and centrosome-dependent exit from mitosis. Plays a role in terminal erythroid differentiation. Inhibits podocyte motility via regulation of actin cytoskeletal dynamics and phosphorylation of CFL1. Promotes keratinocyte terminal differentiation. Involved in osteoblast compaction through the fibronectin fibrillogenesis cell-mediated matrix assembly process, essential for osteoblast mineralization. May regulate closure of the eyelids and ventral body wall by inducing the assembly of actomyosin bundles. The sequence is that of Rho-associated protein kinase 1 (ROCK1) from Oryctolagus cuniculus (Rabbit).